Consider the following 194-residue polypeptide: Probable calcium-binding protein CML45 (194 aa).

The span at 52 to 63 (NNKDQQETLTKQ) shows a compositional bias: basic and acidic residues. The interval 52 to 81 (NNKDQQETLTKQEDDDDDDDDDDDDDDDDI) is disordered. Positions 64–81 (EDDDDDDDDDDDDDDDDI) are enriched in acidic residues. EF-hand domains follow at residues 76 to 98 (DDDDDIDISREEAEMVMRSLGLF), 122 to 157 (ASLEEVKQAFDVFDENKDGFIDAIELQRVLTILGFK), and 160 to 194 (SYLDNCLVMIRSLDGNKDGKIDFNEFVKFMETSFY). Asp135, Asn137, Asp139, Glu146, Asp173, Asn175, Asp177, Lys179, and Glu184 together coordinate Ca(2+).

Its function is as follows. Potential calcium sensor. The protein is Probable calcium-binding protein CML45 of Arabidopsis thaliana (Mouse-ear cress).